Reading from the N-terminus, the 550-residue chain is Glutamine--tRNA ligase (550 aa).

Residues 34 to 44 carry the 'HIGH' region motif; sequence PEPNGYLHLGH. ATP is bound by residues 35–37 and 41–47; these read EPN and HLGHAKS. Positions 67 and 212 each coordinate L-glutamine. ATP contacts are provided by residues Thr231, 261–262, and 269–271; these read RL and LSK. The 'KMSKS' region motif lies at 268–272; it reads VLSKR.

It belongs to the class-I aminoacyl-tRNA synthetase family. As to quaternary structure, monomer.

It is found in the cytoplasm. The enzyme catalyses tRNA(Gln) + L-glutamine + ATP = L-glutaminyl-tRNA(Gln) + AMP + diphosphate. The polypeptide is Glutamine--tRNA ligase (Buchnera aphidicola subsp. Baizongia pistaciae (strain Bp)).